A 450-amino-acid chain; its full sequence is Thiamine biosynthesis regulatory protein (450 aa).

Positions 1 to 12 (MVNSKRQQRSKK) are enriched in basic residues. The disordered stretch occupies residues 1–23 (MVNSKRQQRSKKVASSSKVPPTK). Positions 13–23 (VASSSKVPPTK) are enriched in low complexity. The zn(2)-C6 fungal-type DNA-binding region spans 30-57 (CWACRFKKRRCDENRPICSLCAKHGDNC). Residues 210 to 234 (TDQLPSPGHSMSSAEETTTAALSSP) are disordered.

It is found in the nucleus. Its function is as follows. Positive regulator of thiamine biosynthesis. The protein is Thiamine biosynthesis regulatory protein (THI2) of Saccharomyces cerevisiae (strain ATCC 204508 / S288c) (Baker's yeast).